Consider the following 243-residue polypeptide: Ribonuclease PH (243 aa).

Phosphate is bound by residues Arg91 and 129–131 (GTR).

Belongs to the RNase PH family. In terms of assembly, homohexameric ring arranged as a trimer of dimers.

It carries out the reaction tRNA(n+1) + phosphate = tRNA(n) + a ribonucleoside 5'-diphosphate. Phosphorolytic 3'-5' exoribonuclease that plays an important role in tRNA 3'-end maturation. Removes nucleotide residues following the 3'-CCA terminus of tRNAs; can also add nucleotides to the ends of RNA molecules by using nucleoside diphosphates as substrates, but this may not be physiologically important. Probably plays a role in initiation of 16S rRNA degradation (leading to ribosome degradation) during starvation. This Burkholderia pseudomallei (strain 668) protein is Ribonuclease PH.